Here is a 165-residue protein sequence, read N- to C-terminus: SsrA-binding protein (165 aa).

It belongs to the SmpB family.

Its subcellular location is the cytoplasm. Its function is as follows. Required for rescue of stalled ribosomes mediated by trans-translation. Binds to transfer-messenger RNA (tmRNA), required for stable association of tmRNA with ribosomes. tmRNA and SmpB together mimic tRNA shape, replacing the anticodon stem-loop with SmpB. tmRNA is encoded by the ssrA gene; the 2 termini fold to resemble tRNA(Ala) and it encodes a 'tag peptide', a short internal open reading frame. During trans-translation Ala-aminoacylated tmRNA acts like a tRNA, entering the A-site of stalled ribosomes, displacing the stalled mRNA. The ribosome then switches to translate the ORF on the tmRNA; the nascent peptide is terminated with the 'tag peptide' encoded by the tmRNA and targeted for degradation. The ribosome is freed to recommence translation, which seems to be the essential function of trans-translation. This Parvibaculum lavamentivorans (strain DS-1 / DSM 13023 / NCIMB 13966) protein is SsrA-binding protein.